The sequence spans 292 residues: Cbb3-type cytochrome c oxidase subunit CcoP (292 aa).

2 consecutive transmembrane segments (helical) span residues 11 to 31 (FGLI…SSLI) and 62 to 82 (VGWI…FFFG). Cytochrome c domains are found at residues 116–195 (ELVD…MAEI) and 205–288 (QLID…QSLK). 8 residues coordinate heme c: Cys129, Cys132, His133, Met174, Cys219, Cys222, His223, and Met264.

Belongs to the CcoP / FixP family. In terms of assembly, component of the cbb3-type cytochrome c oxidase at least composed of CcoN, CcoO, CcoQ and CcoP. The cofactor is heme c.

The protein resides in the cell inner membrane. It participates in energy metabolism; oxidative phosphorylation. C-type cytochrome. Part of the cbb3-type cytochrome c oxidase complex. CcoP subunit is required for transferring electrons from donor cytochrome c via its heme groups to CcoO subunit. From there, electrons are shuttled to the catalytic binuclear center of CcoN subunit where oxygen reduction takes place. The complex also functions as a proton pump. The sequence is that of Cbb3-type cytochrome c oxidase subunit CcoP from Helicobacter pylori (strain 52).